A 251-amino-acid polypeptide reads, in one-letter code: FHA domain-containing protein FHA1 (251 aa).

The FHA domain maps to Ile32 to His89. A compositionally biased stretch (acidic residues) spans Glu163 to Asp174. Residues Glu163 to Asp209 are disordered. Residues Thr182–Arg206 show a composition bias toward basic and acidic residues.

As to expression, expressed in roots and vascular tissues near the shoot apex in young seedlings.

It is found in the nucleus. In terms of biological role, may play a role in the control of plant organ development. Does not show transactivation activity in yeast. This is FHA domain-containing protein FHA1 from Arabidopsis thaliana (Mouse-ear cress).